The sequence spans 138 residues: ATP synthase epsilon chain (138 aa).

Belongs to the ATPase epsilon chain family. As to quaternary structure, F-type ATPases have 2 components, CF(1) - the catalytic core - and CF(0) - the membrane proton channel. CF(1) has five subunits: alpha(3), beta(3), gamma(1), delta(1), epsilon(1). CF(0) has three main subunits: a, b and c.

Its subcellular location is the cell membrane. In terms of biological role, produces ATP from ADP in the presence of a proton gradient across the membrane. This Buchnera aphidicola subsp. Schizaphis graminum (strain Sg) protein is ATP synthase epsilon chain (atpC).